We begin with the raw amino-acid sequence, 209 residues long: Uracil phosphoribosyltransferase (209 aa).

Residues arginine 79, arginine 104, and 131–139 each bind 5-phospho-alpha-D-ribose 1-diphosphate; that span reads DPMLATGGS. Uracil contacts are provided by residues isoleucine 194 and 199–201; that span reads GDA. Aspartate 200 is a 5-phospho-alpha-D-ribose 1-diphosphate binding site.

Belongs to the UPRTase family. Mg(2+) serves as cofactor.

It catalyses the reaction UMP + diphosphate = 5-phospho-alpha-D-ribose 1-diphosphate + uracil. Its pathway is pyrimidine metabolism; UMP biosynthesis via salvage pathway; UMP from uracil: step 1/1. Allosterically activated by GTP. Functionally, catalyzes the conversion of uracil and 5-phospho-alpha-D-ribose 1-diphosphate (PRPP) to UMP and diphosphate. The polypeptide is Uracil phosphoribosyltransferase (Listeria innocua serovar 6a (strain ATCC BAA-680 / CLIP 11262)).